A 631-amino-acid chain; its full sequence is Pescadillo homolog (631 aa).

One can recognise a BRCT domain in the interval 321-414 (RLRNLFKGLK…QLLPTNKYFL (94 aa)). Disordered regions lie at residues 450 to 469 (HAQSDDESDEEEAAQNEDDT) and 489 to 569 (EYKK…MVKP). Phosphoserine occurs at positions 453 and 457. Acidic residues-rich tracts occupy residues 454-469 (DDESDEEEAAQNEDDT) and 499-524 (VNEDEEDTDDDFDGEQESDEEEEELD). A coiled-coil region spans residues 510–541 (FDGEQESDEEEEELDEKTKRLQEEKKKMSVQS). Over residues 525-536 (EKTKRLQEEKKK) the composition is skewed to basic and acidic residues. Residues 543–552 (KVHKVNKRQL) are compositionally biased toward basic residues. Over residues 553-562 (HKAEVDEHRL) the composition is skewed to basic and acidic residues.

Belongs to the pescadillo family.

It localises to the nucleus. The protein localises to the nucleolus. It is found in the nucleoplasm. In terms of biological role, required for maturation of ribosomal RNAs and formation of the large ribosomal subunit. This Drosophila mojavensis (Fruit fly) protein is Pescadillo homolog.